A 143-amino-acid chain; its full sequence is Nucleoside diphosphate kinase (143 aa).

The ATP site is built by Lys11, Phe59, Arg87, Thr93, Arg104, and Asn114. The Pros-phosphohistidine intermediate role is filled by His117.

It belongs to the NDK family. In terms of assembly, homotetramer. Requires Mg(2+) as cofactor.

The protein localises to the cytoplasm. The catalysed reaction is a 2'-deoxyribonucleoside 5'-diphosphate + ATP = a 2'-deoxyribonucleoside 5'-triphosphate + ADP. It carries out the reaction a ribonucleoside 5'-diphosphate + ATP = a ribonucleoside 5'-triphosphate + ADP. Its function is as follows. Major role in the synthesis of nucleoside triphosphates other than ATP. The ATP gamma phosphate is transferred to the NDP beta phosphate via a ping-pong mechanism, using a phosphorylated active-site intermediate. This is Nucleoside diphosphate kinase from Shewanella loihica (strain ATCC BAA-1088 / PV-4).